Here is a 279-residue protein sequence, read N- to C-terminus: Tryptophan 2,3-dioxygenase (279 aa).

Substrate-binding positions include 48–52 (FIIQH), Tyr110, and Arg114. Residue His237 coordinates heme. Thr251 provides a ligand contact to substrate.

It belongs to the tryptophan 2,3-dioxygenase family. In terms of assembly, homotetramer. The cofactor is heme.

The catalysed reaction is L-tryptophan + O2 = N-formyl-L-kynurenine. Its pathway is amino-acid degradation; L-tryptophan degradation via kynurenine pathway; L-kynurenine from L-tryptophan: step 1/2. In terms of biological role, heme-dependent dioxygenase that catalyzes the oxidative cleavage of the L-tryptophan (L-Trp) pyrrole ring and converts L-tryptophan to N-formyl-L-kynurenine. Catalyzes the oxidative cleavage of the indole moiety. In Bradyrhizobium diazoefficiens (strain JCM 10833 / BCRC 13528 / IAM 13628 / NBRC 14792 / USDA 110), this protein is Tryptophan 2,3-dioxygenase.